The sequence spans 372 residues: Proton-coupled zinc antiporter SLC30A2 (372 aa).

At 1–140 (MEAKEKQHLL…TMNFGWQRAE (140 aa)) the chain is on the cytoplasmic side. A Mitochondrial localization signal motif is present at residues 51-54 (HHCH). 3 residues coordinate Zn(2+): cysteine 53, histidine 106, and aspartate 110. Residues 141-161 (ILGALVSVLSIWVVTGVLVYL) form a helical membrane-spanning segment. Over 162 to 175 (AVERLISGDYEIDG) the chain is Lumenal. A helical membrane pass occupies residues 176 to 196 (GTMLITSGCAVAVNIIMGLTL). The Cytoplasmic segment spans residues 197-220 (HQSGHGHSHGTTNQQEENPSVRAA). A helical membrane pass occupies residues 221–241 (FIHVIGDFMQSMGVLVAAYIL). Zn(2+) contacts are provided by histidine 223 and aspartate 227. The Lumenal portion of the chain corresponds to 242-249 (YFKPEYKY). A helical membrane pass occupies residues 250–270 (VDPICTFVFSILVLGTTLTIL). The Cytoplasmic segment spans residues 271 to 304 (RDVILVLMEGTPKGVDFTAVRDLLLSVEGVEALH). Residues 294–295 (LL) carry the Lysosomal targeting motif motif. The residue at position 296 (serine 296) is a Phosphoserine. Residues histidine 304, histidine 321, and glutamate 355 each coordinate Zn(2+). The chain crosses the membrane as a helical span at residues 305–325 (SLHIWALTVAQPVLSVHIAIA). Residues 326-372 (QNTDAQAVLKTASSRLQGKFHFHTVTIQIEDYSEDMKDCQACQGPSD) lie on the Lumenal side of the membrane.

This sequence belongs to the cation diffusion facilitator (CDF) transporter (TC 2.A.4) family. SLC30A subfamily. In terms of assembly, homodimer. Interacts (via lysosomal targeting motif) with AP3D1; in AP-3-mediated transport to lysosomes. Interacts with TMEM163. In terms of processing, phosphorylated at Ser-296. Phosphorylation at Ser-296 prevents localization to lysosomes. Dephosphorylation of Ser-296 which triggers localization to lysosomes, accumulation of zinc into lysosomes and lysosomal-mediated cell death is induced by TNF-alpha.

The protein localises to the cytoplasmic vesicle. The protein resides in the secretory vesicle membrane. It localises to the zymogen granule membrane. It is found in the endosome membrane. Its subcellular location is the lysosome membrane. The protein localises to the mitochondrion inner membrane. The protein resides in the cell membrane. It catalyses the reaction Zn(2+)(in) + 2 H(+)(out) = Zn(2+)(out) + 2 H(+)(in). Its function is as follows. Electroneutral proton-coupled antiporter concentrating zinc ions into a variety of intracellular organelles including endosomes, zymogen granules and mitochondria. Thereby, plays a crucial role in cellular zinc homeostasis to confer upon cells protection against its potential cytotoxicity. Regulates the zinc concentration of milk, through the transport of zinc ions into secretory vesicles of mammary cells. By concentrating zinc ions into lysosomes participates to lysosomal-mediated cell death during early mammary gland involution. Electroneutral proton-coupled antiporter mediating the efflux of zinc ions through the plasma membrane. The polypeptide is Proton-coupled zinc antiporter SLC30A2 (Homo sapiens (Human)).